The sequence spans 236 residues: LexA repressor (236 aa).

Positions phenylalanine 26–threonine 46 form a DNA-binding region, H-T-H motif. Residues serine 84–aspartate 107 are disordered. Residues serine 157 and lysine 195 each act as for autocatalytic cleavage activity in the active site.

It belongs to the peptidase S24 family. As to quaternary structure, homodimer.

The catalysed reaction is Hydrolysis of Ala-|-Gly bond in repressor LexA.. Functionally, represses a number of genes involved in the response to DNA damage (SOS response), including recA and lexA. In the presence of single-stranded DNA, RecA interacts with LexA causing an autocatalytic cleavage which disrupts the DNA-binding part of LexA, leading to derepression of the SOS regulon and eventually DNA repair. The chain is LexA repressor from Chelativorans sp. (strain BNC1).